The primary structure comprises 149 residues: Calmodulin (149 aa).

A2 carries the N-acetylalanine modification. EF-hand domains are found at residues 8 to 43, 44 to 79, 81 to 116, and 117 to 149; these read EQVS…LGQN, PSES…KMKD, DSEE…IGEK, and LTDD…MMQK. D21, D23, D25, Q27, E32, D57, D59, N61, T63, E68, D94, D96, N98, E105, D130, D132, D134, R136, and E141 together coordinate Ca(2+).

This sequence belongs to the calmodulin family.

In terms of biological role, calmodulin mediates the control of a large number of enzymes, ion channels and other proteins by Ca(2+). Among the enzymes to be stimulated by the calmodulin-Ca(2+) complex are a number of protein kinases and phosphatases. This chain is Calmodulin (camA), found in Emericella nidulans (strain FGSC A4 / ATCC 38163 / CBS 112.46 / NRRL 194 / M139) (Aspergillus nidulans).